The primary structure comprises 264 residues: S-adenosylmethionine decarboxylase proenzyme (264 aa).

Ser112 acts as the Schiff-base intermediate with substrate; via pyruvic acid in catalysis. Ser112 carries the pyruvic acid (Ser); by autocatalysis modification. His117 serves as the catalytic Proton acceptor; for processing activity. Cys140 functions as the Proton donor; for catalytic activity in the catalytic mechanism.

It belongs to the prokaryotic AdoMetDC family. Type 2 subfamily. As to quaternary structure, heterooctamer of four alpha and four beta chains arranged as a tetramer of alpha/beta heterodimers. The cofactor is pyruvate. Is synthesized initially as an inactive proenzyme. Formation of the active enzyme involves a self-maturation process in which the active site pyruvoyl group is generated from an internal serine residue via an autocatalytic post-translational modification. Two non-identical subunits are generated from the proenzyme in this reaction, and the pyruvate is formed at the N-terminus of the alpha chain, which is derived from the carboxyl end of the proenzyme. The post-translation cleavage follows an unusual pathway, termed non-hydrolytic serinolysis, in which the side chain hydroxyl group of the serine supplies its oxygen atom to form the C-terminus of the beta chain, while the remainder of the serine residue undergoes an oxidative deamination to produce ammonia and the pyruvoyl group blocking the N-terminus of the alpha chain.

The enzyme catalyses S-adenosyl-L-methionine + H(+) = S-adenosyl 3-(methylsulfanyl)propylamine + CO2. The protein operates within amine and polyamine biosynthesis; S-adenosylmethioninamine biosynthesis; S-adenosylmethioninamine from S-adenosyl-L-methionine: step 1/1. In terms of biological role, catalyzes the decarboxylation of S-adenosylmethionine to S-adenosylmethioninamine (dcAdoMet), the propylamine donor required for the synthesis of the polyamines spermine and spermidine from the diamine putrescine. In Salmonella arizonae (strain ATCC BAA-731 / CDC346-86 / RSK2980), this protein is S-adenosylmethionine decarboxylase proenzyme.